Reading from the N-terminus, the 168-residue chain is Phosphopantetheine adenylyltransferase (168 aa).

Residue S8 coordinates substrate. ATP-binding positions include 8 to 9 (SF) and H16. Substrate-binding residues include K40, T72, and R86. ATP is bound by residues 87–89 (GLR), E97, and 122–128 (YSFLSSS).

The protein belongs to the bacterial CoaD family. In terms of assembly, homohexamer. Mg(2+) is required as a cofactor.

It is found in the cytoplasm. The enzyme catalyses (R)-4'-phosphopantetheine + ATP + H(+) = 3'-dephospho-CoA + diphosphate. Its pathway is cofactor biosynthesis; coenzyme A biosynthesis; CoA from (R)-pantothenate: step 4/5. Its function is as follows. Reversibly transfers an adenylyl group from ATP to 4'-phosphopantetheine, yielding dephospho-CoA (dPCoA) and pyrophosphate. In Thermosynechococcus vestitus (strain NIES-2133 / IAM M-273 / BP-1), this protein is Phosphopantetheine adenylyltransferase.